A 348-amino-acid chain; its full sequence is GTPase Obg (348 aa).

The Obg domain maps to 1-159; the sequence is MKFLDQAKIY…KTIILRLKLI (159 aa). The region spanning 160–327 is the OBG-type G domain; sequence ADAGLVGLPN…VLRLAADEIW (168 aa). GTP contacts are provided by residues 166–173, 191–195, 212–215, 279–282, and 308–310; these read GLPNAGKS, FTTLT, DIPG, NKMD, and SGV. The Mg(2+) site is built by S173 and T193.

Belongs to the TRAFAC class OBG-HflX-like GTPase superfamily. OBG GTPase family. As to quaternary structure, monomer. The cofactor is Mg(2+).

It localises to the cytoplasm. Its function is as follows. An essential GTPase which binds GTP, GDP and possibly (p)ppGpp with moderate affinity, with high nucleotide exchange rates and a fairly low GTP hydrolysis rate. Plays a role in control of the cell cycle, stress response, ribosome biogenesis and in those bacteria that undergo differentiation, in morphogenesis control. The sequence is that of GTPase Obg from Parvibaculum lavamentivorans (strain DS-1 / DSM 13023 / NCIMB 13966).